The chain runs to 685 residues: DNA ligase (685 aa).

Residues 48–52 (DAEYD), 97–98 (SL), and E131 each bind NAD(+). Residue K133 is the N6-AMP-lysine intermediate of the active site. NAD(+)-binding residues include R154, E190, K304, and K328. Positions 422, 425, 440, and 445 each coordinate Zn(2+). In terms of domain architecture, BRCT spans 603 to 685 (PEEGPLSGRR…RLLSGEERPG (83 aa)).

Belongs to the NAD-dependent DNA ligase family. LigA subfamily. Mg(2+) serves as cofactor. The cofactor is Mn(2+).

The catalysed reaction is NAD(+) + (deoxyribonucleotide)n-3'-hydroxyl + 5'-phospho-(deoxyribonucleotide)m = (deoxyribonucleotide)n+m + AMP + beta-nicotinamide D-nucleotide.. Functionally, DNA ligase that catalyzes the formation of phosphodiester linkages between 5'-phosphoryl and 3'-hydroxyl groups in double-stranded DNA using NAD as a coenzyme and as the energy source for the reaction. It is essential for DNA replication and repair of damaged DNA. The chain is DNA ligase from Rubrobacter xylanophilus (strain DSM 9941 / JCM 11954 / NBRC 16129 / PRD-1).